A 212-amino-acid polypeptide reads, in one-letter code: Thiamine-phosphate synthase (212 aa).

38–42 (QLREK) provides a ligand contact to 4-amino-2-methyl-5-(diphosphooxymethyl)pyrimidine. Mg(2+) is bound by residues Asp-71 and Asp-90. Lys-138 serves as a coordination point for 4-amino-2-methyl-5-(diphosphooxymethyl)pyrimidine. Residue Gly-166 participates in 2-[(2R,5Z)-2-carboxy-4-methylthiazol-5(2H)-ylidene]ethyl phosphate binding.

It belongs to the thiamine-phosphate synthase family. The cofactor is Mg(2+).

The enzyme catalyses 2-[(2R,5Z)-2-carboxy-4-methylthiazol-5(2H)-ylidene]ethyl phosphate + 4-amino-2-methyl-5-(diphosphooxymethyl)pyrimidine + 2 H(+) = thiamine phosphate + CO2 + diphosphate. The catalysed reaction is 2-(2-carboxy-4-methylthiazol-5-yl)ethyl phosphate + 4-amino-2-methyl-5-(diphosphooxymethyl)pyrimidine + 2 H(+) = thiamine phosphate + CO2 + diphosphate. It carries out the reaction 4-methyl-5-(2-phosphooxyethyl)-thiazole + 4-amino-2-methyl-5-(diphosphooxymethyl)pyrimidine + H(+) = thiamine phosphate + diphosphate. It participates in cofactor biosynthesis; thiamine diphosphate biosynthesis; thiamine phosphate from 4-amino-2-methyl-5-diphosphomethylpyrimidine and 4-methyl-5-(2-phosphoethyl)-thiazole: step 1/1. Functionally, condenses 4-methyl-5-(beta-hydroxyethyl)thiazole monophosphate (THZ-P) and 2-methyl-4-amino-5-hydroxymethyl pyrimidine pyrophosphate (HMP-PP) to form thiamine monophosphate (TMP). This Chlamydia abortus (strain DSM 27085 / S26/3) (Chlamydophila abortus) protein is Thiamine-phosphate synthase.